A 561-amino-acid polypeptide reads, in one-letter code: Asparagine synthetase [glutamine-hydrolyzing] (561 aa).

Catalysis depends on Cys-2, which acts as the For GATase activity. Positions 2–191 constitute a Glutamine amidotransferase type-2 domain; that stretch reads CGIWALFGSD…PGHYEVLDLK (190 aa). L-glutamine-binding positions include 49–53, 75–77, and Asp-97; these read RLAVV and NGE. The Asparagine synthetase domain maps to 213–536; the sequence is HALYDSVEKL…PGRADWLTHY (324 aa). Residues Leu-256, Ile-288, and 363–364 each bind ATP; that span reads SG. Lys-385 carries the post-translational modification N6-acetyllysine. Thr-545 is modified (phosphothreonine). Phosphoserine is present on Ser-557.

The catalysed reaction is L-aspartate + L-glutamine + ATP + H2O = L-asparagine + L-glutamate + AMP + diphosphate + H(+). Its pathway is amino-acid biosynthesis; L-asparagine biosynthesis; L-asparagine from L-aspartate (L-Gln route): step 1/1. This chain is Asparagine synthetase [glutamine-hydrolyzing] (ASNS), found in Cricetulus griseus (Chinese hamster).